The following is a 633-amino-acid chain: MSADTQSETLEFQAEVQQLLSLMIHSVYSNREVFLRELISNASDAIDKLRFEALQQESLYEDDPELKIRVEADPEARTVTVIDNGIGMSREDVIENLGTIAHSGTRRFLEQLTGDQHKDAQLIGQFGVGFYSAFVVADRVEVYTRKAGAAAAEGVRWSSDGQGAYTVDTVERAERGTAVVLHLPEAQQEFCDDMRLRQIIRKYSDHISVPIEMPVRNADQGDDADSEAEAPQWEIVNRASALWMRPKSEISEEDYQELYKHVAHDFDDPLTWIHNHVEGRQSYVSLLYIPKRPPFDLYEQKPAHGVKLYVRRVFITEDTEHLLPRYLRFVRGVIDSDDLPLNISREMLQHNPMISSLRSASVKRILDRLECMAKNEPEDYATFWQAFGRVFKEGIAEDPGNRERIARLLRFSSTHEEKETPDVSLDDYVARMKDGQEKIYYVTAESFNAARNSPHLEIFRRHGIEVLLLPDPVDEWLVAHLHEYDGKQLASVAKGELDLEALGEEDDKQARQEKEQAYEDLCKRLGETLGERVSEVRVSHRLTDSPACLVVGEYDFGMGMQRLLQAAGHQLPAGQPALEVNPDHSVIERLATESGQRFEDWALTLYEQSLLAEGGQLEDPAAYVRRVNNLLAG.

An a; substrate-binding region spans residues 1-345 (MSADTQSETL…SDDLPLNISR (345 aa)). A b region spans residues 346–562 (EMLQHNPMIS…EYDFGMGMQR (217 aa)). The tract at residues 563–633 (LLQAAGHQLP…VRRVNNLLAG (71 aa)) is c.

This sequence belongs to the heat shock protein 90 family. Homodimer.

The protein resides in the cytoplasm. In terms of biological role, molecular chaperone. Has ATPase activity. The polypeptide is Chaperone protein HtpG (Halorhodospira halophila (strain DSM 244 / SL1) (Ectothiorhodospira halophila (strain DSM 244 / SL1))).